The sequence spans 73 residues: U3-agatoxin-Ao1j (73 aa).

The first 20 residues, 1–20 (MRTIISLLLLSAMVFAVIEA), serve as a signal peptide directing secretion. Residues 21 to 34 (ISLEEGLQLFEGER) constitute a propeptide that is removed on maturation. Cystine bridges form between Cys36/Cys52, Cys43/Cys57, Cys51/Cys67, and Cys59/Cys65. Ser71 bears the Serine amide mark.

Belongs to the neurotoxin 07 (Beta/delta-agtx) family. 03 (aga-4) subfamily. Aga sub-subfamily. In terms of tissue distribution, expressed by the venom gland.

It is found in the secreted. Its function is as follows. Insecticidal neurotoxin that induces an irreversible spastic paralysis when injected into insects. Modifies presynaptic voltage-gated sodium channels (Nav), causing them to open at the normal resting potential of the nerve. This leads to spontaneous release of neurotransmitter and repetitive action potentials in motor neurons. The sequence is that of U3-agatoxin-Ao1j from Agelena orientalis (Funnel-web spider).